The chain runs to 193 residues: Orotate phosphoribosyltransferase (193 aa).

5-phospho-alpha-D-ribose 1-diphosphate is bound by residues arginine 102, lysine 103, lysine 106, histidine 108, and glutamate 129 to serine 137. The orotate site is built by threonine 133 and arginine 161.

It belongs to the purine/pyrimidine phosphoribosyltransferase family. PyrE subfamily. Homodimer. Requires Mg(2+) as cofactor.

It catalyses the reaction orotidine 5'-phosphate + diphosphate = orotate + 5-phospho-alpha-D-ribose 1-diphosphate. It functions in the pathway pyrimidine metabolism; UMP biosynthesis via de novo pathway; UMP from orotate: step 1/2. Functionally, catalyzes the transfer of a ribosyl phosphate group from 5-phosphoribose 1-diphosphate to orotate, leading to the formation of orotidine monophosphate (OMP). This is Orotate phosphoribosyltransferase from Prochlorococcus marinus (strain NATL1A).